Here is a 296-residue protein sequence, read N- to C-terminus: Ribonuclease H2 subunit A (296 aa).

Residues proline 14–glutamate 236 form the RNase H type-2 domain. Aspartate 20, glutamate 21, and aspartate 127 together coordinate a divalent metal cation.

Belongs to the RNase HII family. Eukaryotic subfamily. Mn(2+) serves as cofactor. The cofactor is Mg(2+).

The catalysed reaction is Endonucleolytic cleavage to 5'-phosphomonoester.. Its function is as follows. Catalytic subunit of RNase HII, an endonuclease that specifically degrades the RNA of RNA:DNA hybrids. Participates in DNA replication, possibly by mediating the removal of lagging-strand Okazaki fragment RNA primers during DNA replication. Mediates the excision of single ribonucleotides from DNA:RNA duplexes. The protein is Ribonuclease H2 subunit A of Arabidopsis thaliana (Mouse-ear cress).